The sequence spans 395 residues: Chorismate synthase (395 aa).

Arg-48 provides a ligand contact to NADP(+). 125–127 is a binding site for FMN; the sequence is RSS. Residues 264–292 form a disordered region; the sequence is RNEDWTFDDGESFDHVESEEGDPVPVGND. FMN contacts are provided by residues Gly-298, 313–317, and Arg-340; that span reads HAPTS. Residues 373-395 are disordered; it reads PDRVDGNPGQYDTDYHPSSPDND.

Belongs to the chorismate synthase family. It depends on FMNH2 as a cofactor.

The enzyme catalyses 5-O-(1-carboxyvinyl)-3-phosphoshikimate = chorismate + phosphate. It participates in metabolic intermediate biosynthesis; chorismate biosynthesis; chorismate from D-erythrose 4-phosphate and phosphoenolpyruvate: step 7/7. Functionally, catalyzes the anti-1,4-elimination of the C-3 phosphate and the C-6 proR hydrogen from 5-enolpyruvylshikimate-3-phosphate (EPSP) to yield chorismate, which is the branch point compound that serves as the starting substrate for the three terminal pathways of aromatic amino acid biosynthesis. This reaction introduces a second double bond into the aromatic ring system. This is Chorismate synthase from Halorubrum lacusprofundi (strain ATCC 49239 / DSM 5036 / JCM 8891 / ACAM 34).